A 49-amino-acid chain; its full sequence is MRVNITLACTECGDRNYITKKNKRNNPERIELKKYCPRLKRVTLHRETK.

Belongs to the bacterial ribosomal protein bL33 family.

The polypeptide is Large ribosomal subunit protein bL33B (Bacillus cytotoxicus (strain DSM 22905 / CIP 110041 / 391-98 / NVH 391-98)).